A 360-amino-acid polypeptide reads, in one-letter code: Decorin (360 aa).

The signal sequence occupies residues 1–16 (MKATIIFFLVAQVSWA). The propeptide occupies 17-30 (GPFQQKGLFDFMLE). S34 carries O-linked (Xyl...) (glycosaminoglycan) serine glycosylation. 2 cysteine pairs are disulfide-bonded: C55–C61 and C59–C68. 12 LRR repeats span residues 74–94 (EKVPKDLPPDTALLDLQNNKI), 95–118 (TEIKDGDFKNLKNLHTLILINNKI), 119–142 (SKISPGAFAPLVKLERLYLSKNQL), 143–163 (KELPEKMPKTLQELRVHENEI), 164–187 (TKVRKSVFNGLNQMIVVELGTNPL), 188–213 (KSSGIENGAFQGMKKLSYIRIADTNI), 214–234 (TTIPQGLPPSLTELHLDGNKI), 235–258 (TKVDAASLKGLNNLAKLGLSFNSI), 259–282 (SAVDNGSLANTPHLRELHLNNNKL), 283–305 (VKVPGGLADHKYIQVVYLHNNNI), 306–335 (SAIGSNDFCPPGYNTKKASYSGVSLFSNPV), and 336–360 (QYWEIQPSTFRCVYVRAAVQLGNYK). N212 is a glycosylation site (N-linked (GlcNAc...) asparagine). N-linked (GlcNAc...) asparagine glycosylation is found at N263 and N304. C314 and C347 form a disulfide bridge.

Belongs to the small leucine-rich proteoglycan (SLRP) family. SLRP class I subfamily. In terms of assembly, binds to type I and type II collagen, fibronectin and TGF-beta. Forms a ternary complex with MFAP2 and ELN. Interacts with DPT. Post-translationally, the attached glycosaminoglycan chain can be either chondroitin sulfate or dermatan sulfate depending upon the tissue of origin.

Its subcellular location is the secreted. It is found in the extracellular space. The protein resides in the extracellular matrix. In terms of biological role, may affect the rate of fibrils formation. In Ovis aries (Sheep), this protein is Decorin (DCN).